A 254-amino-acid chain; its full sequence is Thiazole synthase (254 aa).

Lysine 95 (schiff-base intermediate with DXP) is an active-site residue. 1-deoxy-D-xylulose 5-phosphate contacts are provided by residues glycine 156, 182 to 183 (AG), and 204 to 205 (NT).

This sequence belongs to the ThiG family. Homotetramer. Forms heterodimers with either ThiH or ThiS.

The protein localises to the cytoplasm. The enzyme catalyses [ThiS sulfur-carrier protein]-C-terminal-Gly-aminoethanethioate + 2-iminoacetate + 1-deoxy-D-xylulose 5-phosphate = [ThiS sulfur-carrier protein]-C-terminal Gly-Gly + 2-[(2R,5Z)-2-carboxy-4-methylthiazol-5(2H)-ylidene]ethyl phosphate + 2 H2O + H(+). Its pathway is cofactor biosynthesis; thiamine diphosphate biosynthesis. Functionally, catalyzes the rearrangement of 1-deoxy-D-xylulose 5-phosphate (DXP) to produce the thiazole phosphate moiety of thiamine. Sulfur is provided by the thiocarboxylate moiety of the carrier protein ThiS. In vitro, sulfur can be provided by H(2)S. In Vibrio atlanticus (strain LGP32) (Vibrio splendidus (strain Mel32)), this protein is Thiazole synthase.